The following is a 337-amino-acid chain: Glyceraldehyde-3-phosphate dehydrogenase 3 (337 aa).

Residues 12 to 13 (RM) and lysine 80 contribute to the NAD(+) site. Residues 152-154 (SCT) and threonine 183 contribute to the D-glyceraldehyde 3-phosphate site. Residue cysteine 153 is the Nucleophile of the active site. Position 184 (asparagine 184) interacts with NAD(+). D-glyceraldehyde 3-phosphate contacts are provided by residues arginine 198, 211–212 (TG), and arginine 234. NAD(+) is bound at residue asparagine 317.

This sequence belongs to the glyceraldehyde-3-phosphate dehydrogenase family. Homotetramer.

The protein resides in the cytoplasm. It carries out the reaction D-glyceraldehyde 3-phosphate + phosphate + NAD(+) = (2R)-3-phospho-glyceroyl phosphate + NADH + H(+). The protein operates within carbohydrate degradation; glycolysis; pyruvate from D-glyceraldehyde 3-phosphate: step 1/5. Its pathway is carbohydrate biosynthesis; gluconeogenesis. Catalyzes the oxidative phosphorylation of glyceraldehyde 3-phosphate (G3P) to 1,3-bisphosphoglycerate (BPG) using the cofactor NAD. The first reaction step involves the formation of a hemiacetal intermediate between G3P and a cysteine residue, and this hemiacetal intermediate is then oxidized to a thioester, with concomitant reduction of NAD to NADH. The reduced NADH is then exchanged with the second NAD, and the thioester is attacked by a nucleophilic inorganic phosphate to produce BPG. The chain is Glyceraldehyde-3-phosphate dehydrogenase 3 (gap3) from Nostoc sp. (strain PCC 7120 / SAG 25.82 / UTEX 2576).